The sequence spans 446 residues: Protein dyf-7 (446 aa).

Positions 1–24 (MNQLWRASCLQVLITFLLIHQNKA) are cleaved as a signal peptide. A ZP domain is found at 35 to 295 (DCIADSFTVV…KTCYKKVSDS (261 aa)). A disulfide bridge links Cys-211 with Cys-273. The helical transmembrane segment at 377-397 (IPLIIMGSLASLLLFSAGAAI) threads the bilayer.

Monomer under reducing conditions. Homodimer under non-reducing conditions. May also form higher order oligomers. Proteolytically cleaved and secreted in vitro. In the embryo, expressed in the excretory cell and, during dendrite formation, in the non-neuronal cells surrounding the sensory neurons, including hypodermal cells.

The protein resides in the cell membrane. It localises to the cell projection. The protein localises to the dendrite. It is found in the secreted. Its function is as follows. Required for permeability of amphid and phasmid neurons to external dyes, chemotaxis to ammonium chloride, avoidance of high osmotic stimuli, male mating and dauer formation. Along with dex-1, enables neurite growth and maintenance by anchoring amphid dendritic tips during neuron cell body migration in embryonic and larval development. This Caenorhabditis elegans protein is Protein dyf-7.